The sequence spans 122 residues: Large ribosomal subunit protein bL17 (122 aa).

The protein belongs to the bacterial ribosomal protein bL17 family. Part of the 50S ribosomal subunit. Contacts protein L32.

The polypeptide is Large ribosomal subunit protein bL17 (Staphylococcus aureus (strain Mu3 / ATCC 700698)).